Here is a 401-residue protein sequence, read N- to C-terminus: Tryptophan synthase beta chain (401 aa).

An N6-(pyridoxal phosphate)lysine modification is found at K92.

Belongs to the TrpB family. As to quaternary structure, tetramer of two alpha and two beta chains. It depends on pyridoxal 5'-phosphate as a cofactor.

The catalysed reaction is (1S,2R)-1-C-(indol-3-yl)glycerol 3-phosphate + L-serine = D-glyceraldehyde 3-phosphate + L-tryptophan + H2O. Its pathway is amino-acid biosynthesis; L-tryptophan biosynthesis; L-tryptophan from chorismate: step 5/5. In terms of biological role, the beta subunit is responsible for the synthesis of L-tryptophan from indole and L-serine. In Ruthia magnifica subsp. Calyptogena magnifica, this protein is Tryptophan synthase beta chain.